The primary structure comprises 205 residues: MLVRLLRVILLASMVFCADILQLSYSDDAKDAIPLGTFEIDSTSDGNVTVTTVNIQDVEVSGEYCLNAQIEGKLDMPCFSYMKLRTPLKYDLIVDVDEDNEVKQVSLSYDETNDAITATVRYPEAGPTAPVTKLKKKTKTYADKKASKNKDGSTAQFEEDEEVKEVSWFQKNWKMLLLGLLIYNFVAGSAKKQQQGGAGADQKTE.

The first 17 residues, 1 to 17 (MLVRLLRVILLASMVFC), serve as a signal peptide directing secretion. The Lumenal portion of the chain corresponds to 18 to 172 (ADILQLSYSD…VKEVSWFQKN (155 aa)). N47 carries an N-linked (GlcNAc...) asparagine glycan. A helical membrane pass occupies residues 173–190 (WKMLLLGLLIYNFVAGSA). At 191–205 (KKQQQGGAGADQKTE) the chain is on the cytoplasmic side.

In terms of assembly, component of the ER membrane protein complex (EMC).

It localises to the endoplasmic reticulum membrane. In terms of biological role, part of the endoplasmic reticulum membrane protein complex (EMC) that enables the energy-independent insertion into endoplasmic reticulum membranes of newly synthesized membrane proteins. Preferentially accommodates proteins with transmembrane domains that are weakly hydrophobic or contain destabilizing features such as charged and aromatic residues. Involved in the cotranslational insertion of multi-pass membrane proteins in which stop-transfer membrane-anchor sequences become ER membrane spanning helices. It is also required for the post-translational insertion of tail-anchored/TA proteins in endoplasmic reticulum membranes. By mediating the proper cotranslational insertion of N-terminal transmembrane domains in an N-exo topology, with translocated N-terminus in the lumen of the ER, controls the topology of multi-pass membrane proteins. The sequence is that of Endoplasmic reticulum membrane protein complex subunit 10 from Saccharomyces cerevisiae (strain ATCC 204508 / S288c) (Baker's yeast).